The following is a 333-amino-acid chain: Protoheme IX farnesyltransferase (333 aa).

Low complexity predominate over residues 1–13; that stretch reads MVSSTSQIISTSP. The disordered stretch occupies residues 1–21; the sequence is MVSSTSQIISTSPSRDDVVPS. 8 helical membrane passes run 38-58, 63-83, 109-129, 132-152, 160-180, 188-208, 245-265, and 286-306; these read LIPLLLATTLGGMALSEGWPL, LACTLGGGALAAAAAGALNCL, AVFTGAISCTLAAAALLVSGV, LAAGLSLLGLCSYVLLYTAFL, IVIGGVAGAIPPLVGAAAATG, WLFALVMVWTPAHFWALAILL, CFGVFALPEGGALYGILLVPF, and AKGLFRWSILYMFGICLLLVV.

It belongs to the UbiA prenyltransferase family. Protoheme IX farnesyltransferase subfamily.

The protein localises to the cell inner membrane. The enzyme catalyses heme b + (2E,6E)-farnesyl diphosphate + H2O = Fe(II)-heme o + diphosphate. It participates in porphyrin-containing compound metabolism; heme O biosynthesis; heme O from protoheme: step 1/1. Converts heme B (protoheme IX) to heme O by substitution of the vinyl group on carbon 2 of heme B porphyrin ring with a hydroxyethyl farnesyl side group. The sequence is that of Protoheme IX farnesyltransferase from Prochlorococcus marinus (strain SARG / CCMP1375 / SS120).